The following is a 251-amino-acid chain: MSDHKPAGQFLDAAIDLLRRVRDEEADSIEAAGTLLADTVQNGGRLFAFGAGHSSLAAQDVVYRAGGLALMNLLTVPGVVGIDVMPATLGSALERVDGLASAVLDSSPLRAGDALVIISLSGRNALPVEMAMHARALGLRVIGVTSVAYASQTTSRHASGTFLKDHCDIVLDSKIAVGDAELTLDTVPAPFAPASTVVTAALMQAVTATAAATLADRGIEPPLLRSGNVDGGHEWNARVLEQYGERIFYRR.

The SIS domain maps to 36–220 (LADTVQNGGR…AATLADRGIE (185 aa)).

The protein belongs to the UPF0309 family.

The polypeptide is UPF0309 protein SCO4393 (Streptomyces coelicolor (strain ATCC BAA-471 / A3(2) / M145)).